The primary structure comprises 595 residues: Pyranose dehydrogenase (595 aa).

The signal sequence occupies residues 1-21 (MARFNARLFSIAILGFQVARS). Asn95 and Asn110 each carry an N-linked (GlcNAc...) asparagine glycan. Position 123 is a tele-8alpha-FAD histidine (His123). 5 N-linked (GlcNAc...) asparagine glycosylation sites follow: Asn195, Asn337, Asn367, Asn502, and Asn510. His530 (proton acceptor) is an active-site residue. Asn541 is a glycosylation site (N-linked (GlcNAc...) asparagine). His574 is a catalytic residue.

Belongs to the GMC oxidoreductase family. In terms of assembly, monomer. FAD is required as a cofactor. N-glycosylated.

The protein localises to the secreted. The enzyme catalyses pyranose + acceptor = pyranos-2-ulose + reduced acceptor.. The catalysed reaction is pyranose + acceptor = pyranos-3-ulose + reduced acceptor.. It carries out the reaction pyranose + acceptor = pyranos-2,3-diulose + reduced acceptor.. It catalyses the reaction a pyranoside + acceptor = a pyranosid-3-ulose + reduced acceptor.. The enzyme catalyses a pyranoside + acceptor = a pyranosid-3,4-diulose + reduced acceptor.. Functionally, catalyzes the single-oxidation or sequential double oxidation reaction of carbohydrates primarily at carbon-2 and/or carbon-3 with the concomitant reduction of the flavin. The enzyme exhibits a broad sugar substrate specificity, oxidizing different aldopyranoses to the corresponding C-1, C-2, C-3 or C-1,2, C-2,3 and C-3,4 (di)dehydro sugars with substrate-specific regioselectivity. Accepts only a narrow range of electron acceptors such as substituted benzoquinones and complexed metal ions and reacts extremely slowly with O(2) as acceptor. May play a role in the natural recycling of plant matter by oxidizing all major monosaccharides in lignocellulose and by reducing quinone compounds or reactive radical species generated during lignin depolymerization. The protein is Pyranose dehydrogenase of Agaricus campestris (Field mushroom).